The following is a 583-amino-acid chain: MRRLFLLLFMLFTTLAHAGNNPFEVKPDFLPVGKAFVFTSERLPSGETQLFWQIADGYYLYQKRLKFDGVAPELQPTLPAGEDHSDEFFGQQTVYRQGLEVKLPAAASGKVKLGWQGCADAGLCYPPQTLEVDLGGAPAVAASNVATTSNGSAQDQLLANDLQHKSWGLGLLAFFGFGLLLAFAPCSLPMLPILAGMVVGSGASPRRGLALASSYVLCMALVYAGMGVIAALLGSNLQAWLQQPWVLGSFAALFVLLSLPMFGFFELQMPALLRDRLEGASRQRQGGSLIGCGILGALSALLVGPCMTAPLAGGLLYIAQTGNALFGGLALFALGLGIGLPLLLLVTLGNRFLPKPGPWMNLLKGVFGILFLGTAIYMLRPVLNPGLWMGLWGALALVVAYCAWQQRAIAGRLLHLFGAGALLFAAWGGMLLVGAAGGGDDLWRPLKVYRGGPVANSVTAHDAFTTVKSPAELQGALDSARAQGQWVLLDYYADWCVSCKIMEKTVFGQPQVLEALKDVRLLRLDVTLDNADGRELLSRYKVPGPPSMLWIGPDGSERRSQRITGEVDANAFLQRWTQTREAR.

The N-terminal stretch at Met-1–Ala-18 is a signal peptide. Intrachain disulfides connect Cys-118-Cys-124 and Cys-186-Cys-306. The next 8 membrane-spanning stretches (helical) occupy residues Gly-168–Leu-188, Ser-214–Gly-234, Trp-245–Phe-265, Leu-289–Ala-309, Phe-326–Val-346, Trp-359–Leu-379, Val-382–Cys-402, and Leu-413–Val-433. The region spanning Val-458–Glu-581 is the Thioredoxin domain. An intrachain disulfide couples Cys-496 to Cys-499.

This sequence belongs to the thioredoxin family. DsbD subfamily.

The protein resides in the cell inner membrane. The catalysed reaction is [protein]-dithiol + NAD(+) = [protein]-disulfide + NADH + H(+). It carries out the reaction [protein]-dithiol + NADP(+) = [protein]-disulfide + NADPH + H(+). Its function is as follows. Required to facilitate the formation of correct disulfide bonds in some periplasmic proteins and for the assembly of the periplasmic c-type cytochromes. Acts by transferring electrons from cytoplasmic thioredoxin to the periplasm. This transfer involves a cascade of disulfide bond formation and reduction steps. In Pseudomonas fluorescens (strain ATCC BAA-477 / NRRL B-23932 / Pf-5), this protein is Thiol:disulfide interchange protein DsbD.